A 272-amino-acid chain; its full sequence is MTTATATATATPGTAAKPVALVTGATSGIGLAIARRLAALGARTFLCARDEERLAQTVKELRGEGFDVDGTVCDVADPAQIRAYVAAAVQRYGTVDILVNNAGRSGGGATAEIADELWLDVITTNLTSVFLMTKEVLNAGGMLAKKRGRIINIASTGGKQGVVHAVPYSASKHGVVGLTKALGLELARTGITVNAVCPGFVETPMAERVREHYAGIWQVSEEETFDRITNRVPLGRYVETREVAAMVEYLVADDAAAVTAQALNVCGGLGNY.

An NAD(+)-binding site is contributed by 21–45 (LVTGATSGIGLAIARRLAALGARTF). Serine 155 contributes to the substrate binding site. Tyrosine 168 acts as the Proton acceptor in catalysis.

It belongs to the short-chain dehydrogenases/reductases (SDR) family.

It functions in the pathway antibiotic biosynthesis; granaticin biosynthesis. This is Granaticin polyketide synthase putative ketoacyl reductase 1 (gra-orf5) from Streptomyces violaceoruber.